The following is a 457-amino-acid chain: MSKRYAVVLAAGQGTRMKSKLYKVLHPVCGKPMVEHVVDQISTLNVDKVVTIVGHGAEKVQEHLAGKSEFVKQEEQLGTAHAVLQAKAELAGKDGVTLVVCGDTPLIEASTMEALLKYHHEKRAKATILTTVIEDPTGYGRIIRDDLGIVEKIVEHKDATEKEQRISEINTGTYCFDNKALFEALENVSNDNVQGEYYLPDVIKILKDSDEVVAAYRMESFEESLGVNDRIALAEASKLMQRRINENHMRNGVTLVNPESTYIDIDVKIGQDTVIEPGVMLRGKTVIGDDCVVTSGSEIVNSVIGERVHVRTSSIFESKVGDDVQIGPYAHLRPESDIHDNVKIGNYVETKKAVVGEGTKLPHFIYMGDAEIGKNVNVGCGSIAVNYDGKNKAKTIIGDNVFVGCNSNLIAPVKVGDRAFIAAGSTITKDVPDDALGIARAKQDNKLGYAKHLNHGK.

The tract at residues 1–230 is pyrophosphorylase; sequence MSKRYAVVLA…FEESLGVNDR (230 aa). Residues 9-12, K23, Q73, and 78-79 contribute to the UDP-N-acetyl-alpha-D-glucosamine site; these read LAAG and GT. D103 serves as a coordination point for Mg(2+). Residues G140, E155, N170, and N228 each contribute to the UDP-N-acetyl-alpha-D-glucosamine site. Position 228 (N228) interacts with Mg(2+). The tract at residues 231–251 is linker; it reads IALAEASKLMQRRINENHMRN. Residues 252–457 form an N-acetyltransferase region; that stretch reads GVTLVNPEST…GYAKHLNHGK (206 aa). UDP-N-acetyl-alpha-D-glucosamine-binding residues include R333 and K351. Catalysis depends on H363, which acts as the Proton acceptor. UDP-N-acetyl-alpha-D-glucosamine-binding residues include Y366 and N377. Acetyl-CoA contacts are provided by residues 386–387, A423, and R440; that span reads NY.

The protein in the N-terminal section; belongs to the N-acetylglucosamine-1-phosphate uridyltransferase family. In the C-terminal section; belongs to the transferase hexapeptide repeat family. As to quaternary structure, homotrimer. The cofactor is Mg(2+).

It localises to the cytoplasm. The enzyme catalyses alpha-D-glucosamine 1-phosphate + acetyl-CoA = N-acetyl-alpha-D-glucosamine 1-phosphate + CoA + H(+). It carries out the reaction N-acetyl-alpha-D-glucosamine 1-phosphate + UTP + H(+) = UDP-N-acetyl-alpha-D-glucosamine + diphosphate. Its pathway is nucleotide-sugar biosynthesis; UDP-N-acetyl-alpha-D-glucosamine biosynthesis; N-acetyl-alpha-D-glucosamine 1-phosphate from alpha-D-glucosamine 6-phosphate (route II): step 2/2. The protein operates within nucleotide-sugar biosynthesis; UDP-N-acetyl-alpha-D-glucosamine biosynthesis; UDP-N-acetyl-alpha-D-glucosamine from N-acetyl-alpha-D-glucosamine 1-phosphate: step 1/1. It functions in the pathway bacterial outer membrane biogenesis; LPS lipid A biosynthesis. Functionally, catalyzes the last two sequential reactions in the de novo biosynthetic pathway for UDP-N-acetylglucosamine (UDP-GlcNAc). The C-terminal domain catalyzes the transfer of acetyl group from acetyl coenzyme A to glucosamine-1-phosphate (GlcN-1-P) to produce N-acetylglucosamine-1-phosphate (GlcNAc-1-P), which is converted into UDP-GlcNAc by the transfer of uridine 5-monophosphate (from uridine 5-triphosphate), a reaction catalyzed by the N-terminal domain. This chain is Bifunctional protein GlmU, found in Listeria monocytogenes serotype 4a (strain HCC23).